The sequence spans 679 residues: Leucine-rich repeat, immunoglobulin-like domain and transmembrane domain-containing protein 3 (679 aa).

Positions methionine 1–cysteine 19 are cleaved as a signal peptide. Topologically, residues leucine 20 to serine 582 are lumenal. LRR repeat units lie at residues proline 56–tyrosine 79, leucine 80–asparagine 103, leucine 104–methionine 128, proline 129–tyrosine 151, and leucine 152–serine 175. One can recognise an LRRCT domain in the interval asparagine 201–lysine 253. Residues proline 254–threonine 344 enclose the Ig-like domain. Cysteine 275 and cysteine 328 form a disulfide bridge. Residue asparagine 296 is glycosylated (N-linked (GlcNAc...) asparagine). Positions threonine 351–arginine 375 are disordered. Residues threonine 357 to tryptophan 367 are compositionally biased toward basic and acidic residues. Residues alanine 486–valine 574 form the Fibronectin type-III domain. The helical transmembrane segment at leucine 583–leucine 603 threads the bilayer. Topologically, residues tyrosine 604–cysteine 679 are cytoplasmic.

In terms of processing, glycosylated. Detected in the outer plexiform layer (OPL) of the retina where it localizes to ON-bipolar cells (at protein level).

It localises to the cell projection. It is found in the dendrite. The protein resides in the perikaryon. Its subcellular location is the endoplasmic reticulum membrane. In terms of biological role, plays a role in the synapse formation and synaptic transmission between cone photoreceptor cells and retinal bipolar cells. Required for normal transmission of a light-evoked stimulus from the cone photoreceptor cells to the ON-bipolar cells and ON-ganglion cells in the inner retina. Required in retinal ON-bipolar cells for normal localization of the cation channel TRPM1 at dendrite tips. Seems to play a specific role in synaptic contacts made by ON-bipolar cells with cone photoreceptor pedicles. May also have a role in cone synapse formation. Might facilitate FGFR1 exit from the endoplasmic reticulum to the Golgi. Could be a regulator of the FGFRs. The protein is Leucine-rich repeat, immunoglobulin-like domain and transmembrane domain-containing protein 3 (LRIT3) of Homo sapiens (Human).